Here is a 405-residue protein sequence, read N- to C-terminus: Argininosuccinate synthase (405 aa).

ATP-binding positions include 10-18 (AYSGGLDTS) and Ala37. L-citrulline is bound by residues Tyr88 and Ser93. An ATP-binding site is contributed by Gly118. L-aspartate contacts are provided by Thr120, Asn124, and Asp125. An L-citrulline-binding site is contributed by Asn124. Positions 128, 179, 188, 264, and 276 each coordinate L-citrulline.

Belongs to the argininosuccinate synthase family. Type 1 subfamily. As to quaternary structure, homotetramer.

The protein resides in the cytoplasm. The catalysed reaction is L-citrulline + L-aspartate + ATP = 2-(N(omega)-L-arginino)succinate + AMP + diphosphate + H(+). It participates in amino-acid biosynthesis; L-arginine biosynthesis; L-arginine from L-ornithine and carbamoyl phosphate: step 2/3. In Pseudomonas putida (strain GB-1), this protein is Argininosuccinate synthase.